Consider the following 326-residue polypeptide: MAASRKGKAVKAVKQEDLRRLMQETRRDSGRQKRVESPFARYSGAGQLMCALCDAPVKNALLWQTHVLGKQHKDKLQELKSRTAPAHTPAPAHTPAHTPAAASSSSSTLKRAAEPPPAPGKRAKLQTGAGAGLGLLAGHYDDDDDDEGGAGERKTAPPTDSALPADFFDSGPAPAPPISHSGSVSKAEQQESQEPPENRPESLPEGFFDDPVRDAQVRQVDTPKDQLEREWEEFQKEMRQVNSASDAIVAEDDEEGRLERQMDEIEEQMQCLRRVEELRAKQETARSRRRSQRREEEPMQEEEPLEEEEELMHILTQDWRAKGALA.

Positions 1-11 are enriched in basic residues; it reads MAASRKGKAVK. The tract at residues 1-37 is disordered; sequence MAASRKGKAVKAVKQEDLRRLMQETRRDSGRQKRVES. The segment covering 13-36 has biased composition (basic and acidic residues); that stretch reads VKQEDLRRLMQETRRDSGRQKRVE. Residues 50–72 form a C2H2-type zinc finger; it reads CALCDAPVKNALLWQTHVLGKQH. A compositionally biased stretch (low complexity) spans 83–108; it reads TAPAHTPAPAHTPAHTPAAASSSSST. Disordered regions lie at residues 83–214, 237–257, and 276–309; these read TAPA…PVRD, EMRQ…EEGR, and EELR…EEEE. Polar residues predominate over residues 180–195; it reads HSGSVSKAEQQESQEP. Residues 224–295 adopt a coiled-coil conformation; it reads KDQLEREWEE…RSRRRSQRRE (72 aa). Basic and acidic residues predominate over residues 276–286; sequence EELRAKQETAR. Over residues 298–309 the composition is skewed to acidic residues; sequence PMQEEEPLEEEE.

It is found in the nucleus. Its subcellular location is the chromosome. The protein resides in the nucleus speckle. Functionally, may act as an important regulator of the cell cycle that participates in the maintenance of genome integrity. In Danio rerio (Zebrafish), this protein is Zinc finger protein 830.